Consider the following 1360-residue polypeptide: DNA-directed RNA polymerase subunit beta (1360 aa).

Belongs to the RNA polymerase beta chain family. As to quaternary structure, the RNAP catalytic core consists of 2 alpha, 1 beta, 1 beta' and 1 omega subunit. When a sigma factor is associated with the core the holoenzyme is formed, which can initiate transcription.

The enzyme catalyses RNA(n) + a ribonucleoside 5'-triphosphate = RNA(n+1) + diphosphate. Its function is as follows. DNA-dependent RNA polymerase catalyzes the transcription of DNA into RNA using the four ribonucleoside triphosphates as substrates. The polypeptide is DNA-directed RNA polymerase subunit beta (Ruthia magnifica subsp. Calyptogena magnifica).